A 259-amino-acid chain; its full sequence is LOB domain-containing protein CRL1 (259 aa).

Positions 6-108 constitute an LOB domain; it reads SPCGACKFLR…AQLASLKAAA (103 aa).

This sequence belongs to the LOB domain-containing protein family. Can form homodimers. As to expression, expressed in unelongating basal internodes, at the base of shoot in parenchyma cells adjacent to the peripheral vascular cylinder of the stem, and root pericycle cells. Expressed in lateral and adventitious root primordia, tiller primordia, vascular tissues, scutellum, and young pedicels.

It is found in the nucleus. Functionally, acts as a positive regulator of adventitious (crown) root formation by promoting its initiation. Acts as a positive regulator of lateral root formation. Regulated by the auxin response factor and transcriptional activator ARF23/ARF1. Involved in auxin-mediated cell dedifferentiation, and may promote the initial cell division in the pericycle cells adjacent to the peripheral vascular cylinder at the base of the stem. May act upstream of the gene regulatory network controlling adventitious root (crown) development. The polypeptide is LOB domain-containing protein CRL1 (Oryza sativa subsp. japonica (Rice)).